Consider the following 452-residue polypeptide: Ketoisovalerate reductase BEA2 (452 aa).

NADP(+) is bound at residue 70–75 (GPGNIG). K285 serves as the catalytic Proton donor. Substrate is bound by residues N289, N293, and S393. Residue E405 participates in NADP(+) binding.

The protein belongs to the ketopantoate reductase family.

The enzyme catalyses (R)-2-hydroxy-3-methylbutanoate + NADP(+) = 3-methyl-2-oxobutanoate + NADPH + H(+). Its function is as follows. Ketoisovalerate reductase; part of the gene cluster that mediates the biosynthesis of beauvericin (BEA), a non-ribosomal cyclic hexadepsipeptide that shows antibiotic, antifungal, insecticidal, and cancer cell antiproliferative and antihaptotactic activity. Ketoisovalerate reductase BEA2 catalyzes the NADPH-specific reduction of ketoisovaleric acid to hydroxyisovalerate, a precursor for beauvericin biosynthesis. The nonribosomal cyclodepsipeptide synthetase BEA1 then catalyzes the formation of beauvericin via condensation and cyclization of 3 dipeptidol monomers, each composed of one unit of hydroxyisovalerate and one unit of N-methyl-phenylalanine. The sequence is that of Ketoisovalerate reductase BEA2 from Gibberella fujikuroi (strain CBS 195.34 / IMI 58289 / NRRL A-6831) (Bakanae and foot rot disease fungus).